A 1507-amino-acid polypeptide reads, in one-letter code: Paired amphipathic helix protein sin-3 (1507 aa).

Disordered stretches follow at residues 1–26 (MYNP…TNNA), 228–286 (PLAL…PPRV), 397–450 (ELGS…MMEE), 543–569 (VDDV…DSSK), and 1349–1434 (IPRE…MDHL). Positions 16–26 (DQSQQQPTNNA) are enriched in polar residues. A compositionally biased stretch (basic residues) spans 270 to 279 (RQNRPGRRKK). One can recognise a PAH domain in the interval 282 to 352 (GPPRVDEALA…LGFNTFLPTG (71 aa)). Over residues 427 to 438 (DGIDDEDDEESG) the composition is skewed to acidic residues. Basic and acidic residues-rich tracts occupy residues 439–450 (IEDKNNEEMMEE) and 555–568 (EIKK…KDSS). Acidic residues-rich tracts occupy residues 1354 to 1365 (KDDDDDDDEEGN), 1373 to 1382 (NVKDEDDGGD), and 1389 to 1421 (PDDD…DEPE).

As to quaternary structure, component of the SIN3S complex, which contains at least sin-3, hda-1, athp-1 and mrg-1. Interacts with ztf-11; the interaction is weak. Interacts with cfp-1. In terms of tissue distribution, expressed in all ray structural cells including ray 6, 7, 8 and 9 of the male tail. Also expressed in the inner labial neurons, socket cells, the cephalic neurons in the head and the ventral nerve cord.

It localises to the nucleus. In terms of biological role, probable transcriptional repressor required for the deposition of dimethylated 'Lys-9' of histone H3 (H3K9me2) on asynapsed chromosome pairs (both autosomes and sex chromosomes) during meiosis, but this does not seem to solely affect the transcriptional status. Plays a role in ray fusion and patterning in the male tail, and this may be through activity of the histone deacetylase complex (HDAC). This chain is Paired amphipathic helix protein sin-3, found in Caenorhabditis elegans.